The following is a 413-amino-acid chain: Histidine--tRNA ligase (413 aa).

This sequence belongs to the class-II aminoacyl-tRNA synthetase family. Homodimer.

Its subcellular location is the cytoplasm. The enzyme catalyses tRNA(His) + L-histidine + ATP = L-histidyl-tRNA(His) + AMP + diphosphate + H(+). The polypeptide is Histidine--tRNA ligase (Geobacter sulfurreducens (strain ATCC 51573 / DSM 12127 / PCA)).